A 283-amino-acid polypeptide reads, in one-letter code: Myeloid differentiation primary response protein MyD88-A (283 aa).

Positions 27-105 constitute a Death domain; the sequence is RLCLYLNPDA…DILTDLGPLI (79 aa). An intermediate domain region spans residues 106-143; sequence EADCMKYLEKKHVPLPIQDDKVDSSEQYRITKSDDPYG. One can recognise a TIR domain in the interval 147–281; sequence ETFDAFICYC…WFWDKLAKAL (135 aa).

The protein localises to the cytoplasm. Its function is as follows. Adapter protein involved in the Toll-like receptor and IL-1 receptor signaling pathway in the innate immune response. Activates expression of target genes in the Spemann organizer region during early embryonic development. Is required for normal axis formation. The protein is Myeloid differentiation primary response protein MyD88-A (myd88-a) of Xenopus laevis (African clawed frog).